The chain runs to 394 residues: RILP-like protein 1 (394 aa).

An RH1 domain is found at 2–89; it reads EGISALEKNV…RLERMDRIEK (88 aa). Positions 68 to 312 form a coiled coil; it reads EMEELRLELD…KVFMLQEELA (245 aa). The region spanning 282–347 is the RH2 domain; sequence RPRFTLQELR…IPQESGIKRL (66 aa). The interval 318–337 is disordered; it reads EADEEHKLPQSSPVIDSKAP.

It belongs to the RILPL family.

The protein localises to the cytoplasm. Its subcellular location is the cytosol. It is found in the cytoskeleton. The protein resides in the microtubule organizing center. It localises to the centrosome. The protein localises to the cell projection. Its subcellular location is the cilium. Functionally, plays a role in the regulation of cell shape and polarity. Plays a role in cellular protein transport, including protein transport away from primary cilia. Neuroprotective protein. This Xenopus tropicalis (Western clawed frog) protein is RILP-like protein 1 (rilpl1).